We begin with the raw amino-acid sequence, 428 residues long: Serine--tRNA ligase (428 aa).

Residue 231–233 coordinates L-serine; the sequence is TAE. Residue 262 to 264 coordinates ATP; sequence RSE. E285 serves as a coordination point for L-serine. Position 349-352 (349-352) interacts with ATP; it reads EISS. S385 is a binding site for L-serine.

This sequence belongs to the class-II aminoacyl-tRNA synthetase family. Type-1 seryl-tRNA synthetase subfamily. Homodimer. The tRNA molecule binds across the dimer.

The protein resides in the cytoplasm. The catalysed reaction is tRNA(Ser) + L-serine + ATP = L-seryl-tRNA(Ser) + AMP + diphosphate + H(+). It catalyses the reaction tRNA(Sec) + L-serine + ATP = L-seryl-tRNA(Sec) + AMP + diphosphate + H(+). It participates in aminoacyl-tRNA biosynthesis; selenocysteinyl-tRNA(Sec) biosynthesis; L-seryl-tRNA(Sec) from L-serine and tRNA(Sec): step 1/1. Its function is as follows. Catalyzes the attachment of serine to tRNA(Ser). Is also able to aminoacylate tRNA(Sec) with serine, to form the misacylated tRNA L-seryl-tRNA(Sec), which will be further converted into selenocysteinyl-tRNA(Sec). This is Serine--tRNA ligase from Staphylococcus aureus (strain USA300).